A 498-amino-acid polypeptide reads, in one-letter code: Cystathionine beta-synthase (498 aa).

The segment at 1-25 is disordered; it reads MSAPEGPSKCTWTPNTTENTPHTTR. Over residues 11–22 the composition is skewed to low complexity; that stretch reads TWTPNTTENTPH. An N6-(pyridoxal phosphate)lysine modification is found at Lys-73. Pyridoxal 5'-phosphate-binding positions include Asn-103, 210–214, and Ser-302; that span reads GTGGT. 2 consecutive CBS domains span residues 374 to 430 and 435 to 497; these read TLPK…KKAV and VSKV…SQQK.

It belongs to the cysteine synthase/cystathionine beta-synthase family. Requires pyridoxal 5'-phosphate as cofactor.

The catalysed reaction is L-homocysteine + L-serine = L,L-cystathionine + H2O. It participates in amino-acid biosynthesis; L-cysteine biosynthesis; L-cysteine from L-homocysteine and L-serine: step 1/2. In Dictyostelium discoideum (Social amoeba), this protein is Cystathionine beta-synthase (cysB).